Here is a 302-residue protein sequence, read N- to C-terminus: Heme A synthase (302 aa).

Residues 1–8 are Cytoplasmic-facing; that stretch reads MFRKQNLK. Residues 9 to 29 form a helical membrane-spanning segment; it reads WLGVLATIIMTFVQLGGALVT. The Extracellular portion of the chain corresponds to 30–67; that stretch reads KTGSEDGCGSSWPLCNGALLPENLPIQTIIELSHRAVS. Cys37 and Cys44 are joined by a disulfide. The active site involves Glu60. His63 provides a ligand contact to heme o. The chain crosses the membrane as a helical span at residues 68-88; sequence AISLIVVLWLVITAWKNIGYI. Over 89-93 the chain is Cytoplasmic; the sequence is KEIKP. A helical transmembrane segment spans residues 94 to 114; sequence LSIISVGFLLVQALVGAAAVI. Over 115-125 the chain is Extracellular; that stretch reads WQQNPYVLALH. His125 contacts heme o. Residues 126 to 146 form a helical membrane-spanning segment; it reads FGISLISFSSVFLMTLIIFSI. The Cytoplasmic segment spans residues 147–161; the sequence is DKKYEADILFIHKPL. Residues 162-182 traverse the membrane as a helical segment; it reads RILTWLMAIIVYLTIYTGALV. The Extracellular segment spans residues 183–215; that stretch reads RHTKSSLAYGAWPIPFDDIVPHNAHDWVQFSHR. Heme b is bound at residue His214. The chain crosses the membrane as a helical span at residues 216–236; that stretch reads GMAFITFIWIMITFIHAIKNY. Residues 237–244 are Cytoplasmic-facing; it reads SDNRTVRY. The chain crosses the membrane as a helical span at residues 245 to 265; it reads GYTASFILVILQVITGALSVI. At 266-270 the chain is on the extracellular side; it reads TNVNL. Residues 271-291 traverse the membrane as a helical segment; sequence IIALFHALFITYLFGMIAYFI. His276 is a heme b binding site. Residues 292–302 are Cytoplasmic-facing; the sequence is LLMLRTTRSLK.

The protein belongs to the COX15/CtaA family. Type 1 subfamily. In terms of assembly, interacts with CtaB. Heme b serves as cofactor.

It is found in the cell membrane. It carries out the reaction Fe(II)-heme o + 2 A + H2O = Fe(II)-heme a + 2 AH2. The protein operates within porphyrin-containing compound metabolism; heme A biosynthesis; heme A from heme O: step 1/1. In terms of biological role, catalyzes the conversion of heme O to heme A by two successive hydroxylations of the methyl group at C8. The first hydroxylation forms heme I, the second hydroxylation results in an unstable dihydroxymethyl group, which spontaneously dehydrates, resulting in the formyl group of heme A. The polypeptide is Heme A synthase (Staphylococcus epidermidis (strain ATCC 12228 / FDA PCI 1200)).